A 205-amino-acid chain; its full sequence is NAD(P)H dehydrogenase (quinone) (205 aa).

A Flavodoxin-like domain is found at 3–194 (VLVVYYSMYG…AAARYQGKHV (192 aa)). Residues 9-14 (SMYGHI) and 82-84 (TRF) each bind FMN. Y11 is a binding site for NAD(+). Substrate is bound at residue W102. Position 138 (H138) interacts with FMN.

Belongs to the WrbA family. It depends on FMN as a cofactor.

It carries out the reaction a quinone + NADH + H(+) = a quinol + NAD(+). It catalyses the reaction a quinone + NADPH + H(+) = a quinol + NADP(+). The protein is NAD(P)H dehydrogenase (quinone) of Geotalea daltonii (strain DSM 22248 / JCM 15807 / FRC-32) (Geobacter daltonii).